Consider the following 375-residue polypeptide: o-succinylbenzoate synthase (375 aa).

K166 functions as the Proton donor in the catalytic mechanism. D191, E216, and D241 together coordinate Mg(2+). K265 functions as the Proton acceptor in the catalytic mechanism.

Belongs to the mandelate racemase/muconate lactonizing enzyme family. MenC type 2 subfamily. As to quaternary structure, homotetramer. It depends on a divalent metal cation as a cofactor.

The catalysed reaction is (1R,6R)-6-hydroxy-2-succinyl-cyclohexa-2,4-diene-1-carboxylate = 2-succinylbenzoate + H2O. It catalyses the reaction N-acetyl-D-methionine = N-acetyl-L-methionine. It carries out the reaction N-acetyl-D-phenylalanine = N-acetyl-L-phenylalanine. The protein operates within quinol/quinone metabolism; 1,4-dihydroxy-2-naphthoate biosynthesis; 1,4-dihydroxy-2-naphthoate from chorismate: step 4/7. Its pathway is quinol/quinone metabolism; menaquinone biosynthesis. In terms of biological role, converts 2-succinyl-6-hydroxy-2,4-cyclohexadiene-1-carboxylate (SHCHC) to 2-succinylbenzoate (OSB). Also acts as a N-succinylamino acid racemase (NSAR) that catalyzes the racemization of various N-succinylamino acids, including N-succinyl-alanine and N-succinyl-phenylalanine. Can catalyze the racemization of a broad range of N-acylamino acids, including N-acetyl-methionine, N-acetyl-phenylalanine, N-carbamoyl-methionine, N-formyl-D-methionine, N-formyl-D-norleucine and N-carbamoyl-D-norleucine. May be a bifunctional enzyme involved in menaquinone biosynthesis and in an irreversible pathway for the conversion of D- to L-amino acids, thereby facilitating the survival and/or growth of the organism. In Geobacillus kaustophilus, this protein is o-succinylbenzoate synthase.